We begin with the raw amino-acid sequence, 258 residues long: tRNA pseudouridine synthase A (258 aa).

The active-site Nucleophile is Asp-53. Position 111 (Tyr-111) interacts with substrate.

It belongs to the tRNA pseudouridine synthase TruA family. Homodimer.

The enzyme catalyses uridine(38/39/40) in tRNA = pseudouridine(38/39/40) in tRNA. In terms of biological role, formation of pseudouridine at positions 38, 39 and 40 in the anticodon stem and loop of transfer RNAs. The sequence is that of tRNA pseudouridine synthase A from Streptococcus agalactiae serotype Ia (strain ATCC 27591 / A909 / CDC SS700).